Consider the following 70-residue polypeptide: Protein SlyX homolog (70 aa).

Belongs to the SlyX family.

This chain is Protein SlyX homolog, found in Pseudoalteromonas atlantica (strain T6c / ATCC BAA-1087).